The chain runs to 252 residues: MSGHNKWANIKHRKAAQDAKRSKIFTKLIREIIVAAREGGGDPETNPRLRAVIERARAANMPKDTIEKSIKKGTGELEGVDYQEIIYEAYAPAGVALYIYAMTDNKNRTAQELRHLLSKHGGSLAESGSVAWLFERKGIIEIPKDKVADFEEFAMVAIDAGAEDIIEDDPIQVVTAPEKLTEVKDNLASNGFEGEAKVTFIPKNTVKVTGADAEKVLKLISVLEDNDDVQEVYANFDIDDKEMEEIMAKLEG.

The protein belongs to the TACO1 family.

The protein resides in the cytoplasm. The chain is Probable transcriptional regulatory protein Tmel_0985 from Thermosipho melanesiensis (strain DSM 12029 / CIP 104789 / BI429).